Reading from the N-terminus, the 319-residue chain is Beta-ketoacyl-[acyl-carrier-protein] synthase III (319 aa).

Active-site residues include Cys113 and His246. Residues 247 to 251 (QANLR) are ACP-binding. Residue Asn276 is part of the active site.

The protein belongs to the thiolase-like superfamily. FabH family. Homodimer.

Its subcellular location is the cytoplasm. The enzyme catalyses malonyl-[ACP] + acetyl-CoA + H(+) = 3-oxobutanoyl-[ACP] + CO2 + CoA. It participates in lipid metabolism; fatty acid biosynthesis. In terms of biological role, catalyzes the condensation reaction of fatty acid synthesis by the addition to an acyl acceptor of two carbons from malonyl-ACP. Catalyzes the first condensation reaction which initiates fatty acid synthesis and may therefore play a role in governing the total rate of fatty acid production. Possesses both acetoacetyl-ACP synthase and acetyl transacylase activities. Its substrate specificity determines the biosynthesis of branched-chain and/or straight-chain of fatty acids. This Chromobacterium violaceum (strain ATCC 12472 / DSM 30191 / JCM 1249 / CCUG 213 / NBRC 12614 / NCIMB 9131 / NCTC 9757 / MK) protein is Beta-ketoacyl-[acyl-carrier-protein] synthase III.